We begin with the raw amino-acid sequence, 265 residues long: Eukaryotic translation initiation factor 3 subunit J (265 aa).

Disordered regions lie at residues Met-1–Leu-113 and Ser-215–Thr-237. Residues Asp-27–Val-45 show a composition bias toward acidic residues. The stretch at Ser-43 to Glu-95 forms a coiled coil. A compositionally biased stretch (basic and acidic residues) spans Glu-46–Ala-62. The span at Glu-86–Glu-97 shows a compositional bias: acidic residues. 2 stretches are compositionally biased toward basic and acidic residues: residues Ala-98 to Leu-113 and Glu-217 to Ser-229.

This sequence belongs to the eIF-3 subunit J family. In terms of assembly, component of the eukaryotic translation initiation factor 3 (eIF-3) complex.

The protein resides in the cytoplasm. Component of the eukaryotic translation initiation factor 3 (eIF-3) complex, which is involved in protein synthesis of a specialized repertoire of mRNAs and, together with other initiation factors, stimulates binding of mRNA and methionyl-tRNAi to the 40S ribosome. The eIF-3 complex specifically targets and initiates translation of a subset of mRNAs involved in cell proliferation. This is Eukaryotic translation initiation factor 3 subunit J (hcr1) from Emericella nidulans (strain FGSC A4 / ATCC 38163 / CBS 112.46 / NRRL 194 / M139) (Aspergillus nidulans).